The following is an 85-amino-acid chain: UPF0291 protein SP_1473 (85 aa).

Residues 62–85 are disordered; it reads TPEKLRQVQREKGLHGRSLDDPNS.

Belongs to the UPF0291 family.

It is found in the cytoplasm. The polypeptide is UPF0291 protein SP_1473 (Streptococcus pneumoniae serotype 4 (strain ATCC BAA-334 / TIGR4)).